We begin with the raw amino-acid sequence, 45 residues long: MEAALLLAKLPEAYSIFDPLVDVLPLIPLFFLLLAFVWQAAVGFK.

A propeptide spanning residues 1-8 (MEAALLLA) is cleaved from the precursor. A helical membrane pass occupies residues 24 to 44 (LPLIPLFFLLLAFVWQAAVGF).

This sequence belongs to the PsbK family. PSII is composed of 1 copy each of membrane proteins PsbA, PsbB, PsbC, PsbD, PsbE, PsbF, PsbH, PsbI, PsbJ, PsbK, PsbL, PsbM, PsbT, PsbX, PsbY, PsbZ, Psb30/Ycf12, peripheral proteins PsbO, CyanoQ (PsbQ), PsbU, PsbV and a large number of cofactors. It forms dimeric complexes.

It is found in the cellular thylakoid membrane. One of the components of the core complex of photosystem II (PSII). PSII is a light-driven water:plastoquinone oxidoreductase that uses light energy to abstract electrons from H(2)O, generating O(2) and a proton gradient subsequently used for ATP formation. It consists of a core antenna complex that captures photons, and an electron transfer chain that converts photonic excitation into a charge separation. The polypeptide is Photosystem II reaction center protein K (Picosynechococcus sp. (strain ATCC 27264 / PCC 7002 / PR-6) (Agmenellum quadruplicatum)).